Here is a 316-residue protein sequence, read N- to C-terminus: Pantothenate kinase (316 aa).

95–102 (GSVAVGKS) is an ATP binding site.

This sequence belongs to the prokaryotic pantothenate kinase family.

It localises to the cytoplasm. The enzyme catalyses (R)-pantothenate + ATP = (R)-4'-phosphopantothenate + ADP + H(+). Its pathway is cofactor biosynthesis; coenzyme A biosynthesis; CoA from (R)-pantothenate: step 1/5. The sequence is that of Pantothenate kinase from Hamiltonella defensa subsp. Acyrthosiphon pisum (strain 5AT).